Reading from the N-terminus, the 492-residue chain is SH2 domain-containing adapter protein E (492 aa).

4 disordered regions span residues 46 to 193 (TASE…DKAK), 214 to 236 (KRTKGQRDAERVGENDGYMEPYD), 260 to 332 (LDGP…EQPW), and 347 to 384 (FEGSDRPPGREDAGRPHHWQKTLKPTLSDHGDGEKVDP). A Phosphoserine modification is found at Ser-103. Basic and acidic residues predominate over residues 149 to 158 (IKVDTQEKNG). Residues 168–184 (TSSSSSSSSSASSSPSS) show a composition bias toward low complexity. Basic and acidic residues-rich tracts occupy residues 214–227 (KRTKGQRDAERVGE), 268–285 (ETVKVEATAKRRSSKDLL), 306–332 (AEVKTRPADSRLPEEDDRPAAEYEQPW), 349–361 (GSDRPPGREDAGR), and 373–383 (LSDHGDGEKVD). The SH2 domain maps to 393-488 (WYHGSISRAE…AEHMTLLHPV (96 aa)).

In terms of tissue distribution, expressed in heart, brain, lung and skeletal muscle.

The chain is SH2 domain-containing adapter protein E (She) from Mus musculus (Mouse).